The primary structure comprises 485 residues: Glutamate--tRNA ligase (485 aa).

A 'HIGH' region motif is present at residues Pro11 to Asn21. The short motif at Lys255 to Arg259 is the 'KMSKS' region element. Position 258 (Lys258) interacts with ATP.

This sequence belongs to the class-I aminoacyl-tRNA synthetase family. Glutamate--tRNA ligase type 1 subfamily. Monomer.

It localises to the cytoplasm. The catalysed reaction is tRNA(Glu) + L-glutamate + ATP = L-glutamyl-tRNA(Glu) + AMP + diphosphate. Its function is as follows. Catalyzes the attachment of glutamate to tRNA(Glu) in a two-step reaction: glutamate is first activated by ATP to form Glu-AMP and then transferred to the acceptor end of tRNA(Glu). This is Glutamate--tRNA ligase from Streptococcus mutans serotype c (strain ATCC 700610 / UA159).